We begin with the raw amino-acid sequence, 276 residues long: 2-dehydro-3-deoxyphosphooctonate aldolase (276 aa).

It belongs to the KdsA family.

The protein resides in the cytoplasm. The catalysed reaction is D-arabinose 5-phosphate + phosphoenolpyruvate + H2O = 3-deoxy-alpha-D-manno-2-octulosonate-8-phosphate + phosphate. It functions in the pathway carbohydrate biosynthesis; 3-deoxy-D-manno-octulosonate biosynthesis; 3-deoxy-D-manno-octulosonate from D-ribulose 5-phosphate: step 2/3. The protein operates within bacterial outer membrane biogenesis; lipopolysaccharide biosynthesis. This Helicobacter acinonychis (strain Sheeba) protein is 2-dehydro-3-deoxyphosphooctonate aldolase.